We begin with the raw amino-acid sequence, 860 residues long: Leucine--tRNA ligase (860 aa).

The short motif at 42-52 (PYPSGRLHMGH) is the 'HIGH' region element. Residues 619–623 (KMSKS) carry the 'KMSKS' region motif. Residue lysine 622 coordinates ATP.

Belongs to the class-I aminoacyl-tRNA synthetase family.

It localises to the cytoplasm. It carries out the reaction tRNA(Leu) + L-leucine + ATP = L-leucyl-tRNA(Leu) + AMP + diphosphate. The chain is Leucine--tRNA ligase from Shigella boydii serotype 18 (strain CDC 3083-94 / BS512).